The chain runs to 823 residues: Leucine--tRNA ligase (823 aa).

The 'HIGH' region motif lies at 42-52; it reads PYPSGTLHMGH. The 'KMSKS' region signature appears at 575 to 579; the sequence is KMSKS. Lys-578 is an ATP binding site.

The protein belongs to the class-I aminoacyl-tRNA synthetase family.

It is found in the cytoplasm. It catalyses the reaction tRNA(Leu) + L-leucine + ATP = L-leucyl-tRNA(Leu) + AMP + diphosphate. The protein is Leucine--tRNA ligase of Legionella pneumophila (strain Paris).